The following is a 125-amino-acid chain: Histone H2B type 1 (125 aa).

Residues 1–36 are disordered; sequence MPEPAKSRPAPKKGSKKAVTKAQKKDGKERKRSRKE. The residue at position 2 (proline 2) is an N-acetylproline. Position 3 is an ADP-ribosyl glutamic acid (glutamate 3). Lysine 6 carries the post-translational modification N6-(2-hydroxyisobutyryl)lysine; alternate. Lysine 6 is modified (N6-(beta-hydroxybutyryl)lysine; alternate). At lysine 6 the chain carries N6-acetyllysine; alternate. Residue lysine 6 is modified to N6-butyryllysine; alternate. Position 6 is an N6-crotonyllysine; alternate (lysine 6). At lysine 6 the chain carries N6-lactoyllysine; alternate. A Glycyl lysine isopeptide (Lys-Gly) (interchain with G-Cter in SUMO2); alternate cross-link involves residue lysine 6. Serine 7 carries the post-translational modification ADP-ribosylserine. A compositionally biased stretch (basic residues) spans 9-19; that stretch reads PAPKKGSKKAV. Lysine 12 is subject to N6-(beta-hydroxybutyryl)lysine; alternate. N6-acetyllysine; alternate occurs at positions 12 and 13. Residues lysine 12 and lysine 13 each carry the N6-crotonyllysine; alternate modification. Lysine 12 bears the N6-lactoyllysine; alternate mark. Lysine 13 carries the post-translational modification N6-(2-hydroxyisobutyryl)lysine; alternate. Serine 15 is subject to Phosphoserine; by STK4/MST1. N6-acetyllysine; alternate is present on residues lysine 16, lysine 17, lysine 21, and lysine 24. Residues lysine 16, lysine 17, lysine 21, and lysine 24 each carry the N6-crotonyllysine; alternate modification. N6-lactoyllysine; alternate is present on residues lysine 16, lysine 17, lysine 21, and lysine 24. An N6-glutaryllysine; alternate modification is found at lysine 17. N6-(2-hydroxyisobutyryl)lysine; alternate occurs at positions 21 and 24. Lysine 21 is subject to N6-(beta-hydroxybutyryl)lysine; alternate. The residue at position 21 (lysine 21) is an N6-butyryllysine; alternate. Residue lysine 21 forms a Glycyl lysine isopeptide (Lys-Gly) (interchain with G-Cter in SUMO2); alternate linkage. Lysine 25 carries the N6-(2-hydroxyisobutyryl)lysine modification. At lysine 35 the chain carries N6-(2-hydroxyisobutyryl)lysine; alternate. Lysine 35 carries the N6-(beta-hydroxybutyryl)lysine; alternate modification. The residue at position 35 (lysine 35) is an N6-crotonyllysine; alternate. Lysine 35 is modified (N6-glutaryllysine; alternate). Lysine 35 is subject to N6-succinyllysine; alternate. Lysine 35 is covalently cross-linked (Glycyl lysine isopeptide (Lys-Gly) (interchain with G-Cter in ubiquitin); alternate). At glutamate 36 the chain carries PolyADP-ribosyl glutamic acid. Serine 37 is modified (phosphoserine; by AMPK). An N6-(2-hydroxyisobutyryl)lysine; alternate mark is found at lysine 44, lysine 47, and lysine 58. Lysine 44 bears the N6-lactoyllysine; alternate mark. 2 positions are modified to N6-glutaryllysine; alternate: lysine 44 and lysine 47. Lysine 47 carries the N6-methyllysine; alternate modification. Lysine 58 carries the post-translational modification N6,N6-dimethyllysine; alternate. Arginine 79 bears the Dimethylated arginine mark. Lysine 85 is modified (N6-(2-hydroxyisobutyryl)lysine; alternate). At lysine 85 the chain carries N6-acetyllysine; alternate. Lysine 85 carries the post-translational modification N6-lactoyllysine; alternate. Position 85 is an N6,N6,N6-trimethyllysine; alternate (lysine 85). 2 positions are modified to omega-N-methylarginine: arginine 86 and arginine 92. The residue at position 108 (lysine 108) is an N6-(2-hydroxyisobutyryl)lysine; alternate. At lysine 108 the chain carries N6-lactoyllysine; alternate. Lysine 108 is modified (N6-glutaryllysine; alternate). Lysine 108 is modified (N6-methyllysine; alternate). O-linked (GlcNAc) serine glycosylation is present at serine 112. Threonine 115 carries the post-translational modification Phosphothreonine. Lysine 116 and lysine 120 each carry N6-(2-hydroxyisobutyryl)lysine; alternate. The residue at position 116 (lysine 116) is an N6-(beta-hydroxybutyryl)lysine; alternate. N6-lactoyllysine; alternate is present on residues lysine 116 and lysine 120. N6-glutaryllysine; alternate occurs at positions 116 and 120. N6-succinyllysine; alternate is present on residues lysine 116 and lysine 120. Residue lysine 116 is modified to N6-methylated lysine; alternate. Residue lysine 120 forms a Glycyl lysine isopeptide (Lys-Gly) (interchain with G-Cter in ubiquitin); alternate linkage.

Belongs to the histone H2B family. The nucleosome is a histone octamer containing two molecules each of H2A, H2B, H3 and H4 assembled in one H3-H4 heterotetramer and two H2A-H2B heterodimers. The octamer wraps approximately 147 bp of DNA. In terms of processing, monoubiquitination at Lys-35 (H2BK34Ub) by the MSL1/MSL2 dimer is required for histone H3 'Lys-4' (H3K4me) and 'Lys-79' (H3K79me) methylation and transcription activation at specific gene loci, such as HOXA9 and MEIS1 loci. Similarly, monoubiquitination at Lys-120 (H2BK120Ub) by the RNF20/40 complex gives a specific tag for epigenetic transcriptional activation and is also prerequisite for histone H3 'Lys-4' and 'Lys-79' methylation. It also functions cooperatively with the FACT dimer to stimulate elongation by RNA polymerase II. H2BK120Ub also acts as a regulator of mRNA splicing: deubiquitination by USP49 is required for efficient cotranscriptional splicing of a large set of exons. Post-translationally, phosphorylated on Ser-15 (H2BS14ph) by STK4/MST1 during apoptosis; which facilitates apoptotic chromatin condensation. Also phosphorylated on Ser-15 in response to DNA double strand breaks (DSBs), and in correlation with somatic hypermutation and immunoglobulin class-switch recombination. Phosphorylation at Ser-37 (H2BS36ph) by AMPK in response to stress promotes transcription. ADP-ribosylated by PARP1 or PARP2 on Ser-7 (H2BS6ADPr) in response to DNA damage. H2BS6ADPr promotes recruitment of CHD1L. Mono-ADP-ribosylated on Glu-3 (H2BE2ADPr) by PARP3 in response to single-strand breaks. Poly ADP-ribosylation on Glu-36 (H2BE35ADPr) by PARP1 regulates adipogenesis: it inhibits phosphorylation at Ser-37 (H2BS36ph), thereby blocking expression of pro-adipogenetic genes. In terms of processing, crotonylation (Kcr) is specifically present in male germ cells and marks testis-specific genes in post-meiotic cells, including X-linked genes that escape sex chromosome inactivation in haploid cells. Crotonylation marks active promoters and enhancers and confers resistance to transcriptional repressors. It is also associated with post-meiotically activated genes on autosomes. Post-translationally, glcNAcylation at Ser-112 promotes monoubiquitination of Lys-120. It fluctuates in response to extracellular glucose, and associates with transcribed genes. Lactylated in macrophages by EP300/P300 by using lactoyl-CoA directly derived from endogenous or exogenous lactate, leading to stimulates gene transcription.

The protein localises to the nucleus. The protein resides in the chromosome. Core component of nucleosome. Nucleosomes wrap and compact DNA into chromatin, limiting DNA accessibility to the cellular machineries which require DNA as a template. Histones thereby play a central role in transcription regulation, DNA repair, DNA replication and chromosomal stability. DNA accessibility is regulated via a complex set of post-translational modifications of histones, also called histone code, and nucleosome remodeling. Functionally, has broad antibacterial activity. May contribute to the formation of the functional antimicrobial barrier of the colonic epithelium, and to the bactericidal activity of amniotic fluid. This is Histone H2B type 1 from Rattus norvegicus (Rat).